Consider the following 140-residue polypeptide: ATP synthase epsilon chain (140 aa).

The protein belongs to the ATPase epsilon chain family. In terms of assembly, F-type ATPases have 2 components, CF(1) - the catalytic core - and CF(0) - the membrane proton channel. CF(1) has five subunits: alpha(3), beta(3), gamma(1), delta(1), epsilon(1). CF(0) has three main subunits: a, b and c.

The protein localises to the cell inner membrane. In terms of biological role, produces ATP from ADP in the presence of a proton gradient across the membrane. This is ATP synthase epsilon chain from Marinobacter nauticus (strain ATCC 700491 / DSM 11845 / VT8) (Marinobacter aquaeolei).